The primary structure comprises 118 residues: Immunoglobulin heavy variable 4-31 (118 aa).

A signal peptide spans 1–19 (MKHLWFFLLLVAAPRWVLS). Residues 20 to 44 (QVQLQESGPGLVKPSQTLSLTCTVS) form a framework-1 region. The Ig-like domain maps to 20 to 118 (QVQLQESGPG…ADTAVYYCAR (99 aa)). Cys-41 and Cys-116 are disulfide-bonded. The tract at residues 45-54 (GGSISSGGYY) is complementarity-determining-1. The interval 55–71 (WSWIRQHPGKGLEWIGY) is framework-2. The complementarity-determining-2 stretch occupies residues 72-78 (IYYSGST). Residues 79–116 (YYNPSLKSLVTISVDTSKNQFSLKLSSVTAADTAVYYC) are framework-3. Residues 117–118 (AR) form a complementarity-determining-3 region.

In terms of assembly, immunoglobulins are composed of two identical heavy chains and two identical light chains; disulfide-linked.

Its subcellular location is the secreted. It is found in the cell membrane. Functionally, v region of the variable domain of immunoglobulin heavy chains that participates in the antigen recognition. Immunoglobulins, also known as antibodies, are membrane-bound or secreted glycoproteins produced by B lymphocytes. In the recognition phase of humoral immunity, the membrane-bound immunoglobulins serve as receptors which, upon binding of a specific antigen, trigger the clonal expansion and differentiation of B lymphocytes into immunoglobulins-secreting plasma cells. Secreted immunoglobulins mediate the effector phase of humoral immunity, which results in the elimination of bound antigens. The antigen binding site is formed by the variable domain of one heavy chain, together with that of its associated light chain. Thus, each immunoglobulin has two antigen binding sites with remarkable affinity for a particular antigen. The variable domains are assembled by a process called V-(D)-J rearrangement and can then be subjected to somatic hypermutations which, after exposure to antigen and selection, allow affinity maturation for a particular antigen. In Homo sapiens (Human), this protein is Immunoglobulin heavy variable 4-31.